The primary structure comprises 424 residues: Protein pellino (424 aa).

A disordered region spans residues 1–21 (MVKRTDGTESPILAEDGGDGH). Serine 10 carries the post-translational modification Phosphoserine.

Belongs to the pellino family. In terms of assembly, interacts with pll.

In terms of biological role, scaffold protein involved in the Toll signaling pathway via its interaction with pelle/pll kinase. This is Protein pellino (Pli) from Drosophila melanogaster (Fruit fly).